A 665-amino-acid polypeptide reads, in one-letter code: Long chain acyl-CoA synthetase 3 (665 aa).

228–239 (IMYTSGTTGDPK) contacts ATP. Residues 495–519 (DGWLHTGDVGEWQPDGAMKIIDRKK) are fatty acid-binding.

The protein belongs to the ATP-dependent AMP-binding enzyme family. Mg(2+) serves as cofactor.

It carries out the reaction a long-chain fatty acid + ATP + CoA = a long-chain fatty acyl-CoA + AMP + diphosphate. It participates in lipid metabolism; fatty acid metabolism. In terms of biological role, activation of long-chain fatty acids for both synthesis of cellular lipids, and degradation via beta-oxidation. Preferentially uses palmitate, palmitoleate, oleate and linoleate. The chain is Long chain acyl-CoA synthetase 3 (LACS3) from Arabidopsis thaliana (Mouse-ear cress).